Reading from the N-terminus, the 116-residue chain is uncharacterized protein (116 aa).

In terms of domain architecture, VOC spans 5–113 (EVKMVVLSTE…TGNGLVFYSP (109 aa)). Lysine 76 participates in a covalent cross-link: Isoglutamyl lysine isopeptide (Lys-Gln) (interchain with Q-Cter in protein Pup).

This is an uncharacterized protein from Mycolicibacterium smegmatis (strain ATCC 700084 / mc(2)155) (Mycobacterium smegmatis).